Here is a 449-residue protein sequence, read N- to C-terminus: POU domain, class 5, transcription factor 1.1 (449 aa).

Disordered stretches follow at residues 79-125 (ENNQ…SPPN) and 170-233 (YPTP…PSES). Residues 97-110 (SRIKVKEEVVHETD) are compositionally biased toward basic and acidic residues. The span at 170–180 (YPTPANQSPNT) shows a compositional bias: polar residues. The segment covering 187–199 (SSMESSRCSSTNS) has biased composition (low complexity). Acidic residues predominate over residues 224 to 233 (DNEEEVPSES). The region spanning 227–301 (EEVPSESEME…FLERWVVEAE (75 aa)) is the POU-specific domain. The homeobox DNA-binding region spans 321–380 (KRKRRTNIENIVKGTLESYFMKCPKPGAQEMVQIAKELNMDKDVVRVWFCNRRQKGKRQG).

It belongs to the POU transcription factor family. Class-5 subfamily. As to quaternary structure, interacts with components of the transcription complex that assembles on the vent2-B gene, including vent2 (via C-terminus), smad1 and smad4. Forms a repression complex on the promoters of the gsc and mix2 genes via interactions with the nodal/activin signaling pathway transducers foxh1/fast1, gtf2ird1/wbscr11 and smad2. Forms a repression complex on the promoters of the nodal/nr1 and siamois genes with the maternal factors tcf7l1/tcf3 and vegt. In terms of tissue distribution, highly enriched within the animal half of developing embryos within ectodermal and mesodermal regions. Expressed in the neuroectoderm at the early neurula stage, with expression initially extending to the future hindbrain/midbrain boundary, but later shifting toward the posterior pole where it persists within the tip of the tail in hatching embryos. Expressed at very low levels in the adult kidney.

The protein resides in the nucleus. Its function is as follows. Transcription factor that binds to the octamer motif (5'-ATTTGCAT-3'). Activates transcription when directly bound to the octamer DNA sequence, but can form repression complexes with other proteins at the promoter site to inhibit transcription. Binds to the promoter of the vent2-B gene to activate transcription when in the presence of other BMP signaling factors also bound to the promoter. Inhibits the competence of ectodermal cells to respond to BMP during embryogenesis thereby inhibiting epidermal differentiation and promoting neural induction. Antagonizes the activity of nodal/activin signaling by forming a transcriptional repression complex on the gsc and mix2 gene promoters to inhibit their transcription, and thus maintain the undifferentiated state of embryonic cells to prevent them from differentiating prematurely. Acts maternally to inhibit vegt and beta-catenin-activated gene transcription by forming a transcriptional repression complex on the nodal/nr1 and siamois promoters to inhibit their transcription. The polypeptide is POU domain, class 5, transcription factor 1.1 (pou5f1.1) (Xenopus laevis (African clawed frog)).